Reading from the N-terminus, the 363-residue chain is Flagellar P-ring protein (363 aa).

The N-terminal stretch at 1–20 (MKCKLIFAVFMLAFSMPSQA) is a signal peptide.

This sequence belongs to the FlgI family. In terms of assembly, the basal body constitutes a major portion of the flagellar organelle and consists of four rings (L,P,S, and M) mounted on a central rod.

Its subcellular location is the periplasm. It is found in the bacterial flagellum basal body. Functionally, assembles around the rod to form the L-ring and probably protects the motor/basal body from shearing forces during rotation. The sequence is that of Flagellar P-ring protein from Shewanella oneidensis (strain ATCC 700550 / JCM 31522 / CIP 106686 / LMG 19005 / NCIMB 14063 / MR-1).